Consider the following 515-residue polypeptide: Fatty acyl-CoA reductase 2 (515 aa).

The Cytoplasmic portion of the chain corresponds to 1–465 (MSMIAAFYGG…AKQHLKRLRN (465 aa)). Residues 466 to 484 (IHYLFNTALFLIAWRLLIA) form a helical membrane-spanning segment. The Peroxisomal portion of the chain corresponds to 485 to 515 (RSQVARNVWFFIVSFCYKFLSYFRASSTLNV).

The protein belongs to the fatty acyl-CoA reductase family.

The protein resides in the peroxisome membrane. It catalyses the reaction a long-chain fatty acyl-CoA + 2 NADPH + 2 H(+) = a long-chain primary fatty alcohol + 2 NADP(+) + CoA. It carries out the reaction hexadecanoyl-CoA + 2 NADPH + 2 H(+) = hexadecan-1-ol + 2 NADP(+) + CoA. The catalysed reaction is octadecanoyl-CoA + 2 NADPH + 2 H(+) = octadecan-1-ol + 2 NADP(+) + CoA. The enzyme catalyses a very long-chain fatty acyl-CoA + 2 NADPH + 2 H(+) = a very long-chain primary fatty alcohol + 2 NADP(+) + CoA. It catalyses the reaction an ultra-long-chain fatty acyl-CoA + 2 NADPH + 2 H(+) = an ultra long-chain primary fatty alcohol + 2 NADP(+) + CoA. It carries out the reaction eicosanoyl-CoA + 2 NADPH + 2 H(+) = eicosan-1-ol + 2 NADP(+) + CoA. The catalysed reaction is docosanoyl-CoA + 2 NADPH + 2 H(+) = docosan-1-ol + 2 NADP(+) + CoA. The enzyme catalyses tetracosanoyl-CoA + 2 NADPH + 2 H(+) = tetracosan-1-ol + 2 NADP(+) + CoA. It catalyses the reaction hexacosanoyl-CoA + 2 NADPH + 2 H(+) = hexacosan-1-ol + 2 NADP(+) + CoA. It carries out the reaction octacosanoyl-CoA + 2 NADPH + 2 H(+) = octacosan-1-ol + 2 NADP(+) + CoA. The catalysed reaction is triacontanoyl-CoA + 2 NADPH + 2 H(+) = triacontan-1-ol + 2 NADP(+) + CoA. The enzyme catalyses 18-methylnonadecanoyl-CoA + 2 NADPH + 2 H(+) = 18-methylnonadecan-1-ol + 2 NADP(+) + CoA. It catalyses the reaction 20-methylheneicosanoyl-CoA + 2 NADPH + 2 H(+) = 20-methylheneicosan-1-ol + 2 NADP(+) + CoA. It carries out the reaction 22-methyltricosanoyl-CoA + 2 NADPH + 2 H(+) = 22-methyltricosan-1-ol + 2 NADP(+) + CoA. The catalysed reaction is 24-methylpentacosanoyl-CoA + 2 NADPH + 2 H(+) = 24-methylpentacosan-1-ol + 2 NADP(+) + CoA. Functionally, catalyzes the reduction of saturated but not unsaturated C16 or C18 fatty acyl-CoA to fatty alcohols (FAls). A lower activity can be observed with shorter fatty acyl-CoA substrates. Can produce very long-chain and ultra long-chain FAls, regardless of whether they have a straight or branched chain. Involved in the production of ether lipids/plasmalogens and wax monoesters whose synthesis requires FAls as substrates. In Bos taurus (Bovine), this protein is Fatty acyl-CoA reductase 2.